Reading from the N-terminus, the 328-residue chain is Src kinase-associated phosphoprotein 2 (328 aa).

In terms of domain architecture, PH spans 103–206 (EYLRAGYLEK…WVNIIMNSRG (104 aa)). The disordered stretch occupies residues 231 to 262 (IYEELPEESEKPVTEIETPKATPVPVNNTSGK). The segment covering 238–248 (ESEKPVTEIET) has biased composition (basic and acidic residues). Residues 266-327 (DYANFYRGLW…PKAYIMEMYD (62 aa)) form the SH3 domain.

It belongs to the SKAP family. In terms of processing, phosphorylated on tyrosines.

The protein resides in the cytoplasm. In terms of biological role, may be involved in B-cell and macrophage adhesion processes. May play a role in src signaling pathway. In Xenopus tropicalis (Western clawed frog), this protein is Src kinase-associated phosphoprotein 2 (skap2).